We begin with the raw amino-acid sequence, 587 residues long: Pectinesterase 2 (587 aa).

The signal sequence occupies residues 1 to 40 (MAPIKEFISKFSDFKNNKKLILSSAAIALLLLASIVGIAA). N-linked (GlcNAc...) asparagine glycans are attached at residues Asn99 and Asn218. The substrate site is built by Thr351 and Gln381. Asp404 functions as the Proton donor in the catalytic mechanism. An intrachain disulfide couples Cys418 to Cys438. Asp425 functions as the Nucleophile in the catalytic mechanism. Substrate contacts are provided by Arg493 and Trp495.

It in the N-terminal section; belongs to the PMEI family. The protein in the C-terminal section; belongs to the pectinesterase family. In terms of tissue distribution, expressed in flower buds.

It is found in the secreted. The protein resides in the cell wall. It catalyses the reaction [(1-&gt;4)-alpha-D-galacturonosyl methyl ester](n) + n H2O = [(1-&gt;4)-alpha-D-galacturonosyl](n) + n methanol + n H(+). Its pathway is glycan metabolism; pectin degradation; 2-dehydro-3-deoxy-D-gluconate from pectin: step 1/5. Its function is as follows. Acts in the modification of cell walls via demethylesterification of cell wall pectin. This chain is Pectinesterase 2 (PME2), found in Arabidopsis thaliana (Mouse-ear cress).